Consider the following 120-residue polypeptide: Large ribosomal subunit protein bL12 (120 aa).

Belongs to the bacterial ribosomal protein bL12 family. Homodimer. Part of the ribosomal stalk of the 50S ribosomal subunit. Forms a multimeric L10(L12)X complex, where L10 forms an elongated spine to which 2 to 4 L12 dimers bind in a sequential fashion. Binds GTP-bound translation factors.

Forms part of the ribosomal stalk which helps the ribosome interact with GTP-bound translation factors. Is thus essential for accurate translation. This chain is Large ribosomal subunit protein bL12, found in Lactobacillus gasseri (strain ATCC 33323 / DSM 20243 / BCRC 14619 / CIP 102991 / JCM 1131 / KCTC 3163 / NCIMB 11718 / NCTC 13722 / AM63).